Here is a 955-residue protein sequence, read N- to C-terminus: Glycine dehydrogenase (decarboxylating) (955 aa).

Residue lysine 702 is modified to N6-(pyridoxal phosphate)lysine.

This sequence belongs to the GcvP family. As to quaternary structure, the glycine cleavage system is composed of four proteins: P, T, L and H. The cofactor is pyridoxal 5'-phosphate.

It catalyses the reaction N(6)-[(R)-lipoyl]-L-lysyl-[glycine-cleavage complex H protein] + glycine + H(+) = N(6)-[(R)-S(8)-aminomethyldihydrolipoyl]-L-lysyl-[glycine-cleavage complex H protein] + CO2. The glycine cleavage system catalyzes the degradation of glycine. The P protein binds the alpha-amino group of glycine through its pyridoxal phosphate cofactor; CO(2) is released and the remaining methylamine moiety is then transferred to the lipoamide cofactor of the H protein. The polypeptide is Glycine dehydrogenase (decarboxylating) (Bordetella avium (strain 197N)).